The sequence spans 202 residues: Myosin regulatory light chain 10 (202 aa).

The interval 1 to 21 (MGQSSLDHGVQGPVAGTGDFG) is disordered. EF-hand domains are found at residues 60–95 (SQIQ…LGRI), 130–165 (DPEE…QADR), and 166–201 (FSEE…GEEK). Ca(2+)-binding residues include Asp73, Asn75, Asp77, and Asp84.

Myosin is a hexamer of 2 heavy chains and 4 light chains. As to expression, specifically expressed in precursor B- and T-lymphocytes.

This is Myosin regulatory light chain 10 (Myl10) from Mus musculus (Mouse).